The primary structure comprises 669 residues: Glutaminase kidney isoform, mitochondrial (669 aa).

The N-terminal 54 residues, 1 to 54 (MMRLRGSGMLRDLLLRSPAGVSATLRRAQPLVTLCRRPRGGGRPAAGPAAAARL), are a transit peptide targeting the mitochondrion. A disordered region spans residues 68-118 (LARGLSSSPSEILQELGKGSTHPQPGVSPPAAPAAPGPKDGPGETDAFGNS). The span at 93–103 (GVSPPAAPAAP) shows a compositional bias: pro residues. N6-succinyllysine occurs at positions 130 and 164. Serine 286 serves as a coordination point for substrate. Lysine 311 is subject to N6-acetyllysine. Positions 315 to 322 (GLRFNKLF) are highly mobile activation loop. Residues asparagine 335, glutamate 381, asparagine 388, tyrosine 414, tyrosine 466, and valine 484 each contribute to the substrate site. 2 ANK repeats span residues 585–614 (DSRT…VNPF) and 619–648 (WNNT…QYTP). The disordered stretch occupies residues 647-669 (TPQGDSDNGKENQTVHKNLDGLL). At serine 652 the chain carries Phosphoserine. Residues 653–669 (DNGKENQTVHKNLDGLL) are compositionally biased toward basic and acidic residues.

This sequence belongs to the glutaminase family. Homotetramer, dimer of dimers. The tetramers can assemble into rod-like oligomers (in vitro), but the physiological significance of this is not clear. Interacts with RAF1 and MAP2K2. Interacts with ATCAY; the interaction is direct and may control GLS localization, negatively regulating its activity. Synthesized as a 74-kDa cytosolic precursor which is proteolytically processed by the mitochondrial-processing peptidase (MPP) via a 72-kDa intermediate to yield the mature mitochondrial 68- and 65-kDa subunits. In terms of tissue distribution, isoform 1 and isoform 3 are detected in brain cortex. Isoform 3 is highly expressed in astrocytoma, ganglioglioma and ependymoma. Isoform 1 is highly expressed in brain and kidney, but not detected in liver. Isoform 3 is highly expressed in heart and pancreas, detected at lower levels in placenta, lung, pancreas and kidney, but is not detected in liver. Isoform 2 is expressed in cardiac and skeletal muscle.

The protein localises to the mitochondrion. Its subcellular location is the cytoplasm. It localises to the cytosol. The protein resides in the mitochondrion matrix. It catalyses the reaction L-glutamine + H2O = L-glutamate + NH4(+). With respect to regulation, isoform 1 and isoform 3 are activated by phosphate. Inhibited by BPTES. BPTES binds between subunits and favors dissociation of the tetramer into dimers. Inhibited by 6-diazo-5-oxo-L-norleucine (DON). Enzyme activity is stimulated by phosphorylation. Catalyzes the first reaction in the primary pathway for the renal catabolism of glutamine. Plays a role in maintaining acid-base homeostasis. Regulates the levels of the neurotransmitter glutamate, the main excitatory neurotransmitter in the brain. In terms of biological role, lacks catalytic activity. This Homo sapiens (Human) protein is Glutaminase kidney isoform, mitochondrial (GLS).